Consider the following 266-residue polypeptide: Large ribosomal subunit protein uL4 (266 aa).

Belongs to the universal ribosomal protein uL4 family. Part of the 50S ribosomal subunit.

Functionally, one of the primary rRNA binding proteins, this protein initially binds near the 5'-end of the 23S rRNA. It is important during the early stages of 50S assembly. It makes multiple contacts with different domains of the 23S rRNA in the assembled 50S subunit and ribosome. Its function is as follows. Forms part of the polypeptide exit tunnel. The protein is Large ribosomal subunit protein uL4 of Sulfolobus acidocaldarius (strain ATCC 33909 / DSM 639 / JCM 8929 / NBRC 15157 / NCIMB 11770).